The chain runs to 120 residues: NAD(P)H-quinone oxidoreductase subunit 3, chloroplastic (120 aa).

The next 3 helical transmembrane spans lie at 9–29 (IFWA…IISG), 60–80 (ICYY…VFLY), and 88–108 (ILGV…IVGS).

It belongs to the complex I subunit 3 family. As to quaternary structure, NDH is composed of at least 16 different subunits, 5 of which are encoded in the nucleus.

Its subcellular location is the plastid. The protein localises to the chloroplast thylakoid membrane. It carries out the reaction a plastoquinone + NADH + (n+1) H(+)(in) = a plastoquinol + NAD(+) + n H(+)(out). The enzyme catalyses a plastoquinone + NADPH + (n+1) H(+)(in) = a plastoquinol + NADP(+) + n H(+)(out). Its function is as follows. NDH shuttles electrons from NAD(P)H:plastoquinone, via FMN and iron-sulfur (Fe-S) centers, to quinones in the photosynthetic chain and possibly in a chloroplast respiratory chain. The immediate electron acceptor for the enzyme in this species is believed to be plastoquinone. Couples the redox reaction to proton translocation, and thus conserves the redox energy in a proton gradient. In Morus indica (Mulberry), this protein is NAD(P)H-quinone oxidoreductase subunit 3, chloroplastic.